The sequence spans 219 residues: Glutathione S-transferase (219 aa).

Residues 2–89 (SQPILGYWDI…YLGRKYKLNG (88 aa)) form the GST N-terminal domain. Residues 8–9 (YW), 44–47 (RSEW), Lys-51, 60–61 (NL), and 73–74 (QT) contribute to the glutathione site. Residues 91 to 207 (NDHEEIRISM…YIKKQQPKTF (117 aa)) enclose the GST C-terminal domain. Position 117 (Tyr-117) interacts with substrate.

This sequence belongs to the GST superfamily. Mu family. In terms of assembly, homodimer.

It localises to the cytoplasm. It carries out the reaction RX + glutathione = an S-substituted glutathione + a halide anion + H(+). In Dermatophagoides pteronyssinus (European house dust mite), this protein is Glutathione S-transferase.